Reading from the N-terminus, the 491-residue chain is GTPase Der (491 aa).

The region spanning 3–178 (AKIALVGRPN…EMRDLLPEED (176 aa)) is the EngA-type G 1 domain. Residues 9-16 (GRPNVGKS), 57-61 (DTGGI), and 130-133 (NKVD) each bind GTP. Residues 198-224 (DAETEDGASASETEEDITEETVEDEPE) are compositionally biased toward acidic residues. A disordered region spans residues 198–225 (DAETEDGASASETEEDITEETVEDEPEA). Residues 227-400 (LRLCMLGRPN…LAARIRRECS (174 aa)) form the EngA-type G 2 domain. GTP is bound by residues 233–240 (GRPNAGKS), 280–284 (DTAGV), and 345–348 (NKMD). In terms of domain architecture, KH-like spans 401–485 (VRIPTGQLNR…PMRVHFRSSH (85 aa)).

The protein belongs to the TRAFAC class TrmE-Era-EngA-EngB-Septin-like GTPase superfamily. EngA (Der) GTPase family. Associates with the 50S ribosomal subunit.

Functionally, GTPase that plays an essential role in the late steps of ribosome biogenesis. In Nitratidesulfovibrio vulgaris (strain ATCC 29579 / DSM 644 / CCUG 34227 / NCIMB 8303 / VKM B-1760 / Hildenborough) (Desulfovibrio vulgaris), this protein is GTPase Der.